The primary structure comprises 254 residues: Probable 2,4-dienoyl-CoA reductase [(2E)-enoyl-CoA-producing] (254 aa).

6–38 (VIITGGSSGMGKAMAKKQAELGWHVMVTGRNHE) lines the NADP(+) pocket. T100 is a binding site for substrate. Y142 functions as the Proton acceptor in the catalytic mechanism. Position 157 (K157) interacts with NAD(+).

Belongs to the short-chain dehydrogenases/reductases (SDR) family. 2,4-dienoyl-CoA reductase subfamily.

The enzyme catalyses a 4,5-saturated-(2E)-enoyl-CoA + NADP(+) = a (2E,4E)-dienoyl-CoA + NADPH + H(+). The catalysed reaction is a (2E,4Z)-dienoyl-CoA + NADPH + H(+) = a 4,5-saturated-(2E)-enoyl-CoA + NADP(+). It participates in lipid metabolism; fatty acid beta-oxidation. Its function is as follows. Auxiliary enzyme of beta-oxidation. It participates in the metabolism of unsaturated fatty enoyl-CoA esters having double bonds in both even- and odd-numbered positions. Catalyzes the NADP-dependent reduction of 2,4-dienoyl-CoA to yield trans-3-enoyl-CoA. The sequence is that of Probable 2,4-dienoyl-CoA reductase [(2E)-enoyl-CoA-producing] (fadH) from Bacillus subtilis (strain 168).